A 479-amino-acid chain; its full sequence is Cardiolipin synthase A (479 aa).

2 helical membrane passes run 8 to 28 and 38 to 58; these read LLAY…IHAV and IAWA…YLIF. 2 consecutive PLD phosphodiesterase domains span residues 218–245 and 392–419; these read VNFR…GDEY and TPGF…DNRS. Active-site residues include H223, K225, D230, H397, K399, and D404.

This sequence belongs to the phospholipase D family. Cardiolipin synthase subfamily. ClsA sub-subfamily.

It is found in the cell inner membrane. The enzyme catalyses 2 a 1,2-diacyl-sn-glycero-3-phospho-(1'-sn-glycerol) = a cardiolipin + glycerol. Its function is as follows. Catalyzes the reversible phosphatidyl group transfer from one phosphatidylglycerol molecule to another to form cardiolipin (CL) (diphosphatidylglycerol) and glycerol. In Pseudomonas fluorescens (strain SBW25), this protein is Cardiolipin synthase A.